The primary structure comprises 91 residues: MNNALGLVETKGLVGAIEAADAMVKSANVQLVGYEKIGSGLVTVMVRGDVGAVKAAVDAGSAAASVVGEVKSCHVIPRPHSDVEAILPKSA.

The BMC domain maps to 4-88 (ALGLVETKGL…PHSDVEAILP (85 aa)).

It belongs to the bacterial microcompartments protein family. Homohexamer with a central pore of about 5.7 Angstroms in diameter. Interacts with PduP, which targets PduP to the BMC.

Its subcellular location is the bacterial microcompartment. The protein operates within polyol metabolism; 1,2-propanediol degradation. In terms of biological role, one of the major shell proteins of the bacterial microcompartment (BMC) dedicated to 1,2-propanediol (1,2-PD) degradation. The isolated BMC shell component protein ratio for J:A:B':B:K:T:U is approximately 15:10:7:6:1:1:2. At least one of PduA or PduJ is required for BMC assembly; it must be encoded as the first gene in the pdu operon. Required for structural integrity of BMCs and to mitigate propionaldehyde toxicity, probably joins facets responsible for BMC closure. Edge residues (particularly Lys-25) are important for function and assembly of the BMC. 80% identical to PduA; although their pore regions appear structurally identical, unlike PduA plays no role in 1,2-PD diffusion into or out of the BMC shell. If pduJ is cloned in the chromosomal position of pduA it is able to complement a pduA deletion; it then has a functional pore as it assumes the transport functions of PduA. Overexpression of this protein leads to aberrant filaments that extend the length of the cell, cross the cleavage furrow and impair division. The filaments form nanotubes with a hollow center. Modeling suggests PduJ is probably the hub for binding multiple enzymes to the interior of the BMC; modeling suggests PduC, PduD, PduG and PduM are targeted to PduJ. Functionally, the 1,2-propanediol (1,2-PD) degradation bacterial microcompartment (BMC) concentrates low levels of 1,2-PD catabolic enzymes, concentrates volatile reaction intermediates thus enhancing pathway flux and keeps the level of toxic, mutagenic propionaldehyde low. This chain is Bacterial microcompartment shell protein PduJ, found in Salmonella typhimurium (strain LT2 / SGSC1412 / ATCC 700720).